Reading from the N-terminus, the 211-residue chain is MTRVALTSAVNLAKKLSDAGIRNQAVLKAISQTPREMFLDNALAHKAYENTALPIGQGQTISQPYIVARMTELLLSNMPKKVLEVGTGSGYQAAILAQLVPELCTIERIKGLQIQARQRLKRLDLHNVSFKYGDGWQGWSNRSPFDAIMVTAAAATVPEALLSQLVDGGVLVLPVGENTQQLMRITRHRERFSSENIETVKFVPLVNGELA.

The active site involves S62.

It belongs to the methyltransferase superfamily. L-isoaspartyl/D-aspartyl protein methyltransferase family.

The protein resides in the cytoplasm. The catalysed reaction is [protein]-L-isoaspartate + S-adenosyl-L-methionine = [protein]-L-isoaspartate alpha-methyl ester + S-adenosyl-L-homocysteine. Catalyzes the methyl esterification of L-isoaspartyl residues in peptides and proteins that result from spontaneous decomposition of normal L-aspartyl and L-asparaginyl residues. It plays a role in the repair and/or degradation of damaged proteins. This chain is Protein-L-isoaspartate O-methyltransferase, found in Shewanella putrefaciens (strain CN-32 / ATCC BAA-453).